The following is a 451-amino-acid chain: Bifunctional protein GlmU (451 aa).

The tract at residues 1–229 is pyrophosphorylase; the sequence is MQRNAVILAA…FNEIMGVNDR (229 aa). Residues 8-11, Lys22, Gln72, and 77-78 contribute to the UDP-N-acetyl-alpha-D-glucosamine site; these read LAAG and GT. Asp102 contacts Mg(2+). The UDP-N-acetyl-alpha-D-glucosamine site is built by Gly139, Glu154, and Asn227. Asn227 lines the Mg(2+) pocket. The segment at 230–250 is linker; the sequence is VMLSNAEKALQQRINIEHMRN. Residues 251 to 451 form an N-acetyltransferase region; it reads GVTIIDPTTT…QITKEGYLKK (201 aa). UDP-N-acetyl-alpha-D-glucosamine contacts are provided by Arg332 and Lys350. Residue His362 is the Proton acceptor of the active site. The UDP-N-acetyl-alpha-D-glucosamine site is built by Tyr365 and Asn376. Acetyl-CoA-binding positions include 385–386, Ala422, and Arg439; that span reads NY.

The protein in the N-terminal section; belongs to the N-acetylglucosamine-1-phosphate uridyltransferase family. This sequence in the C-terminal section; belongs to the transferase hexapeptide repeat family. Homotrimer. It depends on Mg(2+) as a cofactor.

It localises to the cytoplasm. It catalyses the reaction alpha-D-glucosamine 1-phosphate + acetyl-CoA = N-acetyl-alpha-D-glucosamine 1-phosphate + CoA + H(+). The enzyme catalyses N-acetyl-alpha-D-glucosamine 1-phosphate + UTP + H(+) = UDP-N-acetyl-alpha-D-glucosamine + diphosphate. It functions in the pathway nucleotide-sugar biosynthesis; UDP-N-acetyl-alpha-D-glucosamine biosynthesis; N-acetyl-alpha-D-glucosamine 1-phosphate from alpha-D-glucosamine 6-phosphate (route II): step 2/2. It participates in nucleotide-sugar biosynthesis; UDP-N-acetyl-alpha-D-glucosamine biosynthesis; UDP-N-acetyl-alpha-D-glucosamine from N-acetyl-alpha-D-glucosamine 1-phosphate: step 1/1. Its pathway is bacterial outer membrane biogenesis; LPS lipid A biosynthesis. Its function is as follows. Catalyzes the last two sequential reactions in the de novo biosynthetic pathway for UDP-N-acetylglucosamine (UDP-GlcNAc). The C-terminal domain catalyzes the transfer of acetyl group from acetyl coenzyme A to glucosamine-1-phosphate (GlcN-1-P) to produce N-acetylglucosamine-1-phosphate (GlcNAc-1-P), which is converted into UDP-GlcNAc by the transfer of uridine 5-monophosphate (from uridine 5-triphosphate), a reaction catalyzed by the N-terminal domain. The chain is Bifunctional protein GlmU from Staphylococcus haemolyticus (strain JCSC1435).